The primary structure comprises 365 residues: Spermidine-binding periplasmic protein SpuE (365 aa).

The signal sequence occupies residues 1–24 (MQHSIGKTLLVAALATAIAGPVQA). Positions 35, 181, 242, and 269 each coordinate spermidine.

The protein belongs to the bacterial solute-binding protein PotD/PotF family.

Its subcellular location is the periplasm. Spermidine-binding protein probably required for its uptake into cells. Binds spermidine with high affinity (KD=14.3 nM). Does not bind putrescine, cadaverine or spermine. Spermidine binding induces large inter-domain conformational changes. Implicated in induction of type 3 secretion systems (T3SS), which play a role in virulence. The polypeptide is Spermidine-binding periplasmic protein SpuE (spuE) (Pseudomonas aeruginosa (strain ATCC 15692 / DSM 22644 / CIP 104116 / JCM 14847 / LMG 12228 / 1C / PRS 101 / PAO1)).